The chain runs to 109 residues: Anti-sigma-B factor antagonist (109 aa).

In terms of domain architecture, STAS spans 3–109 (INVDVKQNEN…ISAKSEGGVQ (107 aa)). Residues serine 52 and serine 56 each carry the phosphoserine modification. Threonine 57 is modified (phosphothreonine).

The protein belongs to the anti-sigma-factor antagonist family. In terms of assembly, monomer. In stressed cells, forms a complex with RsbW. The predominant form of this complex has a stoichiometry of 2:2 (one dimer of RsbW is bound by two monomers of RsbV). Binds to RsbW in the presence of low levels of ATP or under conditions of energy or environmental stress (through dephosphorylation by RsbP or RsbU). In terms of processing, phosphorylated by RsbW on a serine residue. Dephosphorylated by RsbP or RsbU.

Positive regulator of sigma-B activity. Non-phosphorylated RsbV binds to RsbW, preventing its association with sigma-B. When phosphorylated, releases RsbW, which is then free to complex with and inactivate sigma-B. This chain is Anti-sigma-B factor antagonist (rsbV), found in Bacillus subtilis (strain 168).